Consider the following 390-residue polypeptide: Formamidopyrimidine-DNA glycosylase (390 aa).

P2 (schiff-base intermediate with DNA) is an active-site residue. E3 functions as the Proton donor in the catalytic mechanism. K60 acts as the Proton donor; for beta-elimination activity in catalysis. DNA is bound by residues Y107, R126, K167, and N186. The tract at residues 283 to 390 (AEKAAKVRPA…AGKKPKGRKS (108 aa)) is disordered. Over residues 301-316 (DDGDGEEDEQETEKED) the composition is skewed to acidic residues. A compositionally biased stretch (basic residues) spans 321-337 (SKKGQKPRGGRGKKPAS). The segment covering 343–355 (ESDDDGDDSEAEE) has biased composition (acidic residues). Residues 360-370 (PKGRGTKPAIK) are compositionally biased toward basic residues.

This sequence belongs to the FPG family. In terms of assembly, monomer. Expressed in leaves (at protein levels).

It localises to the nucleus. It catalyses the reaction Hydrolysis of DNA containing ring-opened 7-methylguanine residues, releasing 2,6-diamino-4-hydroxy-5-(N-methyl)formamidopyrimidine.. The enzyme catalyses 2'-deoxyribonucleotide-(2'-deoxyribose 5'-phosphate)-2'-deoxyribonucleotide-DNA = a 3'-end 2'-deoxyribonucleotide-(2,3-dehydro-2,3-deoxyribose 5'-phosphate)-DNA + a 5'-end 5'-phospho-2'-deoxyribonucleoside-DNA + H(+). Its function is as follows. Involved in base excision repair of DNA damaged by oxidation or by mutagenic agents. Acts as a DNA glycosylase that recognizes and removes damaged bases. Can process efficiently 4,6-diamino-5-formamidopyrimidine (FapyA), 2,6-diamino-4- hydroxy-5-formamidopyrimidine (FapyG) and the further oxidation products of 8-oxoguanine (8-oxoG), such as guanidinohydantoin and spiroiminodihydantoin. Has marginal activity towards 8-oxoG. Has AP (apurinic/apyrimidinic) lyase activity. Cleaves the DNA backbone by beta-delta elimination to generate a single-strand break at the site of the removed base with both 3'- and 5'-phosphates. The sequence is that of Formamidopyrimidine-DNA glycosylase (FPG1) from Arabidopsis thaliana (Mouse-ear cress).